We begin with the raw amino-acid sequence, 330 residues long: Glycerol-3-phosphate dehydrogenase [NAD(P)+] (330 aa).

NADPH-binding residues include Ser11, Phe12, Arg32, and Lys106. Lys106, Gly133, and Ser135 together coordinate sn-glycerol 3-phosphate. Residue Ala137 participates in NADPH binding. The sn-glycerol 3-phosphate site is built by Lys188, Asp241, Ser251, Arg252, and Asn253. Residue Lys188 is the Proton acceptor of the active site. Residue Arg252 coordinates NADPH. Positions 276 and 278 each coordinate NADPH.

The protein belongs to the NAD-dependent glycerol-3-phosphate dehydrogenase family.

It is found in the cytoplasm. The enzyme catalyses sn-glycerol 3-phosphate + NAD(+) = dihydroxyacetone phosphate + NADH + H(+). The catalysed reaction is sn-glycerol 3-phosphate + NADP(+) = dihydroxyacetone phosphate + NADPH + H(+). The protein operates within membrane lipid metabolism; glycerophospholipid metabolism. In terms of biological role, catalyzes the reduction of the glycolytic intermediate dihydroxyacetone phosphate (DHAP) to sn-glycerol 3-phosphate (G3P), the key precursor for phospholipid synthesis. This chain is Glycerol-3-phosphate dehydrogenase [NAD(P)+], found in Clostridium botulinum (strain Eklund 17B / Type B).